A 310-amino-acid polypeptide reads, in one-letter code: tRNA pseudouridine synthase B (310 aa).

D49 serves as the catalytic Nucleophile.

This sequence belongs to the pseudouridine synthase TruB family. Type 1 subfamily.

It carries out the reaction uridine(55) in tRNA = pseudouridine(55) in tRNA. Responsible for synthesis of pseudouridine from uracil-55 in the psi GC loop of transfer RNAs. This is tRNA pseudouridine synthase B from Sinorhizobium medicae (strain WSM419) (Ensifer medicae).